The primary structure comprises 218 residues: NADH-ubiquinone oxidoreductase 21 kDa subunit, mitochondrial (218 aa).

A mitochondrion-targeting transit peptide spans 1 to 33 (MSALRITTASAARMLRTSNAMMPSVMGAAQRRA). The interval 31-74 (RRALSDSAEPARVPSVESARVPEKLAKEDSPLATPKRNSPDYNV) is disordered. Basic and acidic residues predominate over residues 50–60 (RVPEKLAKEDS).

It belongs to the complex I NDUFS4 subunit family. In terms of assembly, complex I is composed of about 40 different subunits. This is a component of the iron-sulfur (IP) fragment of the enzyme.

It localises to the mitochondrion inner membrane. In terms of biological role, accessory subunit of the mitochondrial membrane respiratory chain NADH dehydrogenase (Complex I), that is believed not to be involved in catalysis. Complex I functions in the transfer of electrons from NADH to the respiratory chain. The immediate electron acceptor for the enzyme is believed to be ubiquinone. This Neurospora crassa (strain ATCC 24698 / 74-OR23-1A / CBS 708.71 / DSM 1257 / FGSC 987) protein is NADH-ubiquinone oxidoreductase 21 kDa subunit, mitochondrial (nuo-21).